A 101-amino-acid polypeptide reads, in one-letter code: MAKKSSVEKNNHRKDLVKRFAEKRKALLAIANDESREMEERFEARLKLAELPRNSSATRIRNRCEMTGRPRAYYRKLGISRVALRELGNRGLIPGLVKSSW.

This sequence belongs to the universal ribosomal protein uS14 family. As to quaternary structure, part of the 30S ribosomal subunit. Contacts proteins S3 and S10.

Functionally, binds 16S rRNA, required for the assembly of 30S particles and may also be responsible for determining the conformation of the 16S rRNA at the A site. The sequence is that of Small ribosomal subunit protein uS14 from Methylorubrum extorquens (strain PA1) (Methylobacterium extorquens).